The following is a 591-amino-acid chain: Aspartate--tRNA(Asp/Asn) ligase (591 aa).

An L-aspartate-binding site is contributed by Glu174. The aspartate stretch occupies residues 198–201 (QLFK). Arg220 is a binding site for L-aspartate. ATP contacts are provided by residues 220-222 (RDE) and Gln229. His450 is a binding site for L-aspartate. Glu483 is an ATP binding site. L-aspartate is bound at residue Arg490. 535–538 (GLDR) serves as a coordination point for ATP.

Belongs to the class-II aminoacyl-tRNA synthetase family. Type 1 subfamily. Homodimer.

It localises to the cytoplasm. It carries out the reaction tRNA(Asx) + L-aspartate + ATP = L-aspartyl-tRNA(Asx) + AMP + diphosphate. In terms of biological role, aspartyl-tRNA synthetase with relaxed tRNA specificity since it is able to aspartylate not only its cognate tRNA(Asp) but also tRNA(Asn). Reaction proceeds in two steps: L-aspartate is first activated by ATP to form Asp-AMP and then transferred to the acceptor end of tRNA(Asp/Asn). This Azotobacter vinelandii (strain DJ / ATCC BAA-1303) protein is Aspartate--tRNA(Asp/Asn) ligase.